The following is a 362-amino-acid chain: GTPase Obg (362 aa).

One can recognise an Obg domain in the interval 1-159; sequence MKFIDEARIE…RKLKLELKVL (159 aa). The segment at 129–148 is disordered; that stretch reads HFKSSTNRAPRQKTNGKEGE. Positions 130-141 are enriched in polar residues; it reads FKSSTNRAPRQK. The 175-residue stretch at 160–334 folds into the OBG-type G domain; the sequence is ADVGLLGMPN…LCYALQDYLD (175 aa). GTP is bound by residues 166 to 173, 191 to 195, 213 to 216, 284 to 287, and 315 to 317; these read GMPNAGKS, FTTLH, DIPG, NKVD, and SAL. Ser173 and Thr193 together coordinate Mg(2+). The disordered stretch occupies residues 340-362; the sequence is RDDAEERAADPRYQDQAADKSPD.

This sequence belongs to the TRAFAC class OBG-HflX-like GTPase superfamily. OBG GTPase family. In terms of assembly, monomer. The cofactor is Mg(2+).

It is found in the cytoplasm. Functionally, an essential GTPase which binds GTP, GDP and possibly (p)ppGpp with moderate affinity, with high nucleotide exchange rates and a fairly low GTP hydrolysis rate. Plays a role in control of the cell cycle, stress response, ribosome biogenesis and in those bacteria that undergo differentiation, in morphogenesis control. The protein is GTPase Obg of Polynucleobacter asymbioticus (strain DSM 18221 / CIP 109841 / QLW-P1DMWA-1) (Polynucleobacter necessarius subsp. asymbioticus).